The following is a 795-amino-acid chain: Toll-like receptor 6 (795 aa).

An N-terminal signal peptide occupies residues 1 to 27; the sequence is MSQDRKPIVGSFHFVCALALIVGSMTP. Residues 28 to 584 are Extracellular-facing; that stretch reads FSNELESMVD…FHMSPLSCDT (557 aa). N-linked (GlcNAc...) asparagine glycosylation occurs at Asn42. LRR repeat units lie at residues 54 to 77, 78 to 101, 102 to 125, 126 to 150, 151 to 175, 176 to 199, 200 to 223, 224 to 250, 251 to 278, 279 to 308, 309 to 337, 338 to 361, 362 to 388, 389 to 414, 415 to 437, 438 to 457, 458 to 478, 479 to 500, and 501 to 524; these read TKAL…FLSE, LRVL…FNQD, LEYL…SLRH, LDLS…KLTF, LGLS…SCIL, LDLV…TTVL, HLVF…LGHL, QLSN…RGPT, LLNV…PRPV, EYLN…KSLM, IEHV…KMLS, ISDT…LNFT, QNVF…QRNG, LKNF…SLNS, LNSH…NLSS, NMLT…VLDL, HNNR…LQEL, NVAS…LSVL, and VIDH…IRSL. The N-linked (GlcNAc...) asparagine glycan is linked to Asn114. Cys117 and Cys139 are oxidised to a cystine. N-linked (GlcNAc...) asparagine glycosylation is present at Asn144. Residues Asn195 and Asn214 are each glycosylated (N-linked (GlcNAc...) asparagine). An intrachain disulfide couples Cys235 to Cys265. Residues Asn253 and Asn285 are each glycosylated (N-linked (GlcNAc...) asparagine). Cysteines 348 and 373 form a disulfide. Asn359 is a glycosylation site (N-linked (GlcNAc...) asparagine). Asn401 and Asn434 each carry an N-linked (GlcNAc...) asparagine glycan. A disulfide bond links Cys424 and Cys447. Residues 525-576 form the LRRCT domain; it reads TAGNNPFQCTCELRDFVKNIGWVAREVVEGWPDSYRCDYPESSKGTALRDFH. Residues 585–605 form a helical membrane-spanning segment; the sequence is VLLTVTIGATMLVLAVTGAFL. Topologically, residues 606–795 are cytoplasmic; sequence CLYFDLPWYV…ALVNEDDVKT (190 aa). The TIR domain occupies 640 to 781; sequence LQFHAFVSYS…LFWANLRASF (142 aa).

This sequence belongs to the Toll-like receptor family. As to quaternary structure, homodimer (via cytoplasmic TIR domain). Heterodimer with TLR2 via their respective extracellular domains. Binds MYD88 via their respective TIR domains. Interacts with CD36, following CD36 stimulation by oxLDL or amyloid-beta 42, and forms a heterodimer with TLR4. The trimeric complex is internalized and triggers inflammatory response. LYN kinase activity facilitates TLR4:TLR6 heterodimerization and signal initiation. The heterodimer TLR2:TLR6 interacts with CD14 and CD36 in response to triacylated lipopeptides. In terms of tissue distribution, detected in thymus, spleen, ovary and lung. Expressed in macrohpages.

The protein resides in the cell membrane. Its subcellular location is the cytoplasmic vesicle. The protein localises to the phagosome membrane. It is found in the membrane raft. It localises to the golgi apparatus. In terms of biological role, participates in the innate immune response to Gram-positive bacteria and fungi. Specifically recognizes diacylated and, to a lesser extent, triacylated lipopeptides. In response to diacylated lipopeptides, forms the activation cluster TLR2:TLR6:CD14:CD36, this cluster triggers signaling from the cell surface and subsequently is targeted to the Golgi in a lipid-raft dependent pathway. Acts via MYD88 and TRAF6, leading to NF-kappa-B activation, cytokine secretion and the inflammatory response. Recognizes mycoplasmal macrophage-activating lipopeptide-2kD (MALP-2), soluble tuberculosis factor (STF), phenol-soluble modulin (PSM) and B.burgdorferi outer surface protein A lipoprotein (OspA-L) cooperatively with TLR2. In complex with TLR4, promotes sterile inflammation in monocytes/macrophages in response to oxidized low-density lipoprotein (oxLDL) or amyloid-beta 42. In this context, the initial signal is provided by oxLDL- or amyloid-beta 42-binding to CD36. This event induces the formation of a heterodimer of TLR4 and TLR6, which is rapidly internalized and triggers inflammatory response, leading to the NF-kappa-B-dependent production of CXCL1, CXCL2 and CCL9 cytokines, via MYD88 signaling pathway, and CCL5 cytokine, via TICAM1 signaling pathway, as well as IL1B secretion. In Mus musculus (Mouse), this protein is Toll-like receptor 6 (Tlr6).